A 255-amino-acid polypeptide reads, in one-letter code: MVKSHIGSWILVLFVAMWSDVGLCKKRPKPGGGWNTGGSRYPGQGSPGGNRYPPQGGGGWGQPHGGGWGQPHGGGWGQPHGGGWGQPHGGGGWGQGGTHSQWNKPSKPKTNMKHVAGAAAAGAVVGGLGGYLLGSAMSRPLIHFGNDCEDRYYRENMYRYPNQVYYRSVDQYNNQSTFVHDCVNITVKQHTVTTTKGENFTETDIKMMERVVEQMCITQYQRESEAYYQRGASVILFSSPPVILLVSFLIFLIVG.

The first 24 residues, 1-24 (MVKSHIGSWILVLFVAMWSDVGLC), serve as a signal peptide directing secretion. The segment at 25–41 (KKRPKPGGGWNTGGSRY) is interaction with ADGRG6. Residues 25–232 (KKRPKPGGGW…ESEAYYQRGA (208 aa)) are interaction with GRB2, ERI3 and SYN1. The interval 28–110 (PKPGGGWNTG…QWNKPSKPKT (83 aa)) is disordered. Repeat copies occupy residues 54–62 (PQGGGGWGQ), 63–70 (PHGGGWGQ), 71–78 (PHGGGWGQ), 79–86 (PHGGGWGQ), and 87–94 (PHGGGGWG). The segment at 54–94 (PQGGGGWGQPHGGGWGQPHGGGWGQPHGGGWGQPHGGGGWG) is 5 X 8 AA tandem repeats of P-H-G-G-G-W-G-Q. A compositionally biased stretch (gly residues) spans 55-97 (QGGGGWGQPHGGGWGQPHGGGWGQPHGGGWGQPHGGGGWGQGG). Cu(2+)-binding residues include His-64, Gly-65, Gly-66, His-72, Gly-73, Gly-74, His-80, Gly-81, Gly-82, His-88, Gly-90, and Gly-91. 3 N-linked (GlcNAc...) asparagine glycosylation sites follow: Asn-174, Asn-184, and Asn-199. Cys-182 and Cys-216 are joined by a disulfide. The GPI-anchor amidated alanine moiety is linked to residue Ala-232. The propeptide at 233-255 (SVILFSSPPVILLVSFLIFLIVG) is removed in mature form.

It belongs to the prion family. In terms of assembly, monomer and homodimer. Has a tendency to aggregate into amyloid fibrils containing a cross-beta spine, formed by a steric zipper of superposed beta-strands. Soluble oligomers may represent an intermediate stage on the path to fibril formation. Copper binding may promote oligomerization. Interacts with GRB2, APP, ERI3/PRNPIP and SYN1. Mislocalized cytosolically exposed PrP interacts with MGRN1; this interaction alters MGRN1 subcellular location and causes lysosomal enlargement. Interacts with APP. Interacts with KIAA1191. Interacts with ADGRG6.

The protein localises to the cell membrane. The protein resides in the golgi apparatus. Functionally, its primary physiological function is unclear. May play a role in neuronal development and synaptic plasticity. May be required for neuronal myelin sheath maintenance. May promote myelin homeostasis through acting as an agonist for ADGRG6 receptor. May play a role in iron uptake and iron homeostasis. Soluble oligomers are toxic to cultured neuroblastoma cells and induce apoptosis (in vitro). Association with GPC1 (via its heparan sulfate chains) targets PRNP to lipid rafts. Also provides Cu(2+) or Zn(2+) for the ascorbate-mediated GPC1 deaminase degradation of its heparan sulfate side chains. This is Major prion protein (PRNP) from Canis lupus familiaris (Dog).